Reading from the N-terminus, the 518-residue chain is Sodium-dependent glucose transporter 1 (518 aa).

The next 12 membrane-spanning stretches (helical) occupy residues 19–39, 53–73, 82–102, 107–127, 139–159, 221–241, 307–327, 347–367, 376–396, 400–420, 438–458, and 466–486; these read TFQD…FIFV, GFLV…SATT, CKTA…IGIL, NVLI…ALHF, LAKL…SDFH, FRRA…FFFY, TSSL…IATS, YTTI…LGEM, LQGK…ASIA, LFPV…KEDR, EEEN…EMIE, and SIIE…YNQY. Residues 414–426 show a composition bias toward basic and acidic residues; that stretch reads RQRKEDRKSEDQK. The tract at residues 414 to 448 is disordered; that stretch reads RQRKEDRKSEDQKALLSSSGLNEYEEENEEEDAEK. Positions 436 to 448 are enriched in acidic residues; the sequence is EYEEENEEEDAEK.

It belongs to the major facilitator superfamily.

It is found in the apical cell membrane. Functionally, may function as a sodium-dependent glucose transporter. Potential channels for urea in the inner medulla of kidney. This Homo sapiens (Human) protein is Sodium-dependent glucose transporter 1.